Reading from the N-terminus, the 421-residue chain is ATP-dependent RNA helicase RhlB (421 aa).

Positions 9–37 (QKFSDFALHPKVVEALEKKGFHNCTPIQA) match the Q motif motif. The Helicase ATP-binding domain maps to 40–219 (LPLTLAGRDV…FEQMNNAEYI (180 aa)). Residue 53–60 (AQTGTGKT) participates in ATP binding. Residues 165–168 (DEAD) carry the DEAD box motif. The region spanning 245–390 (RLLQTLIEEE…VSKYNPDALM (146 aa)) is the Helicase C-terminal domain. Residues 392 to 421 (DLPKPLRLTRPRTGNGPRRTGAPRNRRRSG) form a disordered region. A compositionally biased stretch (low complexity) spans 402–414 (PRTGNGPRRTGAP).

The protein belongs to the DEAD box helicase family. RhlB subfamily. In terms of assembly, component of the RNA degradosome, which is a multiprotein complex involved in RNA processing and mRNA degradation.

Its subcellular location is the cytoplasm. The catalysed reaction is ATP + H2O = ADP + phosphate + H(+). Functionally, DEAD-box RNA helicase involved in RNA degradation. Has RNA-dependent ATPase activity and unwinds double-stranded RNA. The sequence is that of ATP-dependent RNA helicase RhlB from Escherichia fergusonii (strain ATCC 35469 / DSM 13698 / CCUG 18766 / IAM 14443 / JCM 21226 / LMG 7866 / NBRC 102419 / NCTC 12128 / CDC 0568-73).